The following is a 295-amino-acid chain: Ribosomal protein L11 methyltransferase (295 aa).

S-adenosyl-L-methionine-binding residues include threonine 145, glycine 166, aspartate 188, and asparagine 230.

It belongs to the methyltransferase superfamily. PrmA family.

The protein resides in the cytoplasm. It catalyses the reaction L-lysyl-[protein] + 3 S-adenosyl-L-methionine = N(6),N(6),N(6)-trimethyl-L-lysyl-[protein] + 3 S-adenosyl-L-homocysteine + 3 H(+). Functionally, methylates ribosomal protein L11. This chain is Ribosomal protein L11 methyltransferase, found in Pectobacterium carotovorum subsp. carotovorum (strain PC1).